The sequence spans 305 residues: tRNA dimethylallyltransferase 1 (305 aa).

An ATP-binding site is contributed by 10–17 (GPTASGKT). 12–17 (TASGKT) contributes to the substrate binding site. An interaction with substrate tRNA region spans residues 35 to 38 (DSRQ).

The protein belongs to the IPP transferase family. Monomer. Requires Mg(2+) as cofactor.

The enzyme catalyses adenosine(37) in tRNA + dimethylallyl diphosphate = N(6)-dimethylallyladenosine(37) in tRNA + diphosphate. Catalyzes the transfer of a dimethylallyl group onto the adenine at position 37 in tRNAs that read codons beginning with uridine, leading to the formation of N6-(dimethylallyl)adenosine (i(6)A). The sequence is that of tRNA dimethylallyltransferase 1 from Syntrophus aciditrophicus (strain SB).